A 365-amino-acid polypeptide reads, in one-letter code: MQGFRNHRKLSLELTQPRLLVIGPNGIGKSNLLEAVELLGSLRSHRCSQDRDLIQWEAPRALLRAGLDDGDQLELELRRQGGRQARRNGKTLDRQLDLIGPLRCIGFSALDLELVRGEPALRRQWLDRVVLQLEPVYADLLGRYNRLLRQRSQLWRRGAQTNPNQRDALLDAFDVQMALVSTRIHRRRQRALRRLEPIARRWQSHLSAGSEELELHYQPGSRLDAEEAEEPWRLAIEEQLRLQRPEEERLGSCRVGPHRDEVSLQLGGTPARRFGSSGQQRSLVLGLKLAELELVTQLFGEAPLLLLDDVLAELDPTRQHLLLEAVGQEHQCLVSATHLSGFEGGWREHSQILKPGDLSPGVEIG.

23–30 (GPNGIGKS) lines the ATP pocket.

The protein belongs to the RecF family.

It localises to the cytoplasm. Its function is as follows. The RecF protein is involved in DNA metabolism; it is required for DNA replication and normal SOS inducibility. RecF binds preferentially to single-stranded, linear DNA. It also seems to bind ATP. This Parasynechococcus marenigrum (strain WH8102) protein is DNA replication and repair protein RecF.